The chain runs to 190 residues: Protein LIGHT-DEPENDENT SHORT HYPOCOTYLS 1 (190 aa).

Residues 1–26 (MDLISHQPNKNPNSSTQLTPPSSSRY) are compositionally biased toward polar residues. Disordered regions lie at residues 1–28 (MDLISHQPNKNPNSSTQLTPPSSSRYEN) and 145–190 (GVSY…GATV). Residues 25–152 (RYENQKRRDW…ARGVSYEKKR (128 aa)) enclose the ALOG domain. The short motif at 150 to 154 (KKRKR) is the Nuclear localization signal element. Low complexity predominate over residues 158–179 (QKPQTQPPLQLQQQQQQPQQGQ). Over residues 180 to 190 (SMMANYSGATV) the composition is skewed to polar residues.

This sequence belongs to the plant homeotic and developmental regulators ALOG protein family. As to expression, expressed in hypocotyls, shoot apices and lateral root primordia and, weakly, in vascular tissues.

The protein localises to the nucleus. In terms of biological role, probable transcription regulator that acts as a developmental regulator by promoting cell growth in response to continuous red (cR), far-red (cFR) and blue (cB) light in a phytochrome-dependent manner, at least during seedling development. The polypeptide is Protein LIGHT-DEPENDENT SHORT HYPOCOTYLS 1 (LSH1) (Arabidopsis thaliana (Mouse-ear cress)).